A 629-amino-acid chain; its full sequence is Glutamyl-tRNA(Gln) amidotransferase subunit E (629 aa).

Positions 405 to 426 (PEETRRALPDGNTQYMRPLPGK) are disordered.

It belongs to the GatB/GatE family. GatE subfamily. As to quaternary structure, heterodimer of GatD and GatE.

It catalyses the reaction L-glutamyl-tRNA(Gln) + L-glutamine + ATP + H2O = L-glutaminyl-tRNA(Gln) + L-glutamate + ADP + phosphate + H(+). Allows the formation of correctly charged Gln-tRNA(Gln) through the transamidation of misacylated Glu-tRNA(Gln) in organisms which lack glutaminyl-tRNA synthetase. The reaction takes place in the presence of glutamine and ATP through an activated gamma-phospho-Glu-tRNA(Gln). The GatDE system is specific for glutamate and does not act on aspartate. The sequence is that of Glutamyl-tRNA(Gln) amidotransferase subunit E from Thermococcus sibiricus (strain DSM 12597 / MM 739).